A 257-amino-acid polypeptide reads, in one-letter code: Putative hydro-lyase Bamb_5282 (257 aa).

The protein belongs to the D-glutamate cyclase family.

This chain is Putative hydro-lyase Bamb_5282, found in Burkholderia ambifaria (strain ATCC BAA-244 / DSM 16087 / CCUG 44356 / LMG 19182 / AMMD) (Burkholderia cepacia (strain AMMD)).